Reading from the N-terminus, the 88-residue chain is Sec-independent protein translocase protein TatA (88 aa).

The helical transmembrane segment at 1–21 (MGSLSPWHWAILAVVVIVLFG) threads the bilayer. The span at 43 to 52 (MREMQSETKA) shows a compositional bias: basic and acidic residues. Positions 43–88 (MREMQSETKAEPSAIETNTANPTPVQSQRIDPAAATGQDQTEARPA) are disordered. Polar residues predominate over residues 57–71 (IETNTANPTPVQSQR).

It belongs to the TatA/E family. In terms of assembly, the Tat system comprises two distinct complexes: a TatABC complex, containing multiple copies of TatA, TatB and TatC subunits, and a separate TatA complex, containing only TatA subunits. Substrates initially bind to the TatABC complex, which probably triggers association of the separate TatA complex to form the active translocon.

It localises to the cell membrane. Part of the twin-arginine translocation (Tat) system that transports large folded proteins containing a characteristic twin-arginine motif in their signal peptide across membranes. TatA could form the protein-conducting channel of the Tat system. This Mycobacterium marinum (strain ATCC BAA-535 / M) protein is Sec-independent protein translocase protein TatA.